The sequence spans 257 residues: Zinc import ATP-binding protein ZnuC (257 aa).

An ABC transporter domain is found at 5-220; that stretch reads VELQSVTVTF…PSYVALFGQQ (216 aa). Position 37-44 (37-44) interacts with ATP; sequence GPNGAGKS. The tract at residues 234-257 is disordered; that stretch reads HEHDLAGSPVGPCQHNKQHGHDNA.

This sequence belongs to the ABC transporter superfamily. Zinc importer (TC 3.A.1.15.5) family. The complex is composed of two ATP-binding proteins (ZnuC), two transmembrane proteins (ZnuB) and a solute-binding protein (ZnuA).

The protein resides in the cell inner membrane. The enzyme catalyses Zn(2+)(out) + ATP(in) + H2O(in) = Zn(2+)(in) + ADP(in) + phosphate(in) + H(+)(in). Its function is as follows. Part of the ABC transporter complex ZnuABC involved in zinc import. Responsible for energy coupling to the transport system. The protein is Zinc import ATP-binding protein ZnuC of Photobacterium profundum (strain SS9).